Consider the following 261-residue polypeptide: Ribosomal RNA small subunit methyltransferase J (261 aa).

S-adenosyl-L-methionine-binding positions include 111–112 (RD), 127–128 (ER), 163–164 (SS), and Asp181.

This sequence belongs to the methyltransferase superfamily. RsmJ family.

Its subcellular location is the cytoplasm. The catalysed reaction is guanosine(1516) in 16S rRNA + S-adenosyl-L-methionine = N(2)-methylguanosine(1516) in 16S rRNA + S-adenosyl-L-homocysteine + H(+). In terms of biological role, specifically methylates the guanosine in position 1516 of 16S rRNA. The chain is Ribosomal RNA small subunit methyltransferase J from Shewanella sp. (strain MR-7).